The primary structure comprises 308 residues: Aspartate carbamoyltransferase catalytic subunit (308 aa).

Carbamoyl phosphate-binding residues include R50 and T51. K78 contributes to the L-aspartate binding site. R100, H131, and Q134 together coordinate carbamoyl phosphate. L-aspartate is bound by residues R164 and R216. A259 and P260 together coordinate carbamoyl phosphate.

This sequence belongs to the aspartate/ornithine carbamoyltransferase superfamily. ATCase family. In terms of assembly, heterododecamer (2C3:3R2) of six catalytic PyrB chains organized as two trimers (C3), and six regulatory PyrI chains organized as three dimers (R2).

It catalyses the reaction carbamoyl phosphate + L-aspartate = N-carbamoyl-L-aspartate + phosphate + H(+). The protein operates within pyrimidine metabolism; UMP biosynthesis via de novo pathway; (S)-dihydroorotate from bicarbonate: step 2/3. Catalyzes the condensation of carbamoyl phosphate and aspartate to form carbamoyl aspartate and inorganic phosphate, the committed step in the de novo pyrimidine nucleotide biosynthesis pathway. In Oenococcus oeni (strain ATCC BAA-331 / PSU-1), this protein is Aspartate carbamoyltransferase catalytic subunit.